Reading from the N-terminus, the 551-residue chain is Peptidyl-prolyl cis-trans isomerase-like 4 (551 aa).

One can recognise a PPIase cyclophilin-type domain in the interval 1-185 (MSVLLETSLG…RDIRIRHVVV (185 aa)). The segment at 54–88 (GDPSNTGKGGASIWSQLPSTSQDSSTSTYFTPESS) is disordered. A compositionally biased stretch (polar residues) spans 66 to 88 (IWSQLPSTSQDSSTSTYFTPESS). The region spanning 262-340 (NILFVCKLNP…RRIWVDFSQS (79 aa)) is the RRM domain. Residues 352–551 (RNAGSDAPRA…RQRSRDGSRR (200 aa)) form a disordered region. Basic and acidic residues-rich tracts occupy residues 384–397 (KRGD…RDQP) and 408–454 (SRQD…SHRD). The span at 455 to 464 (HERHHLSRHV) shows a compositional bias: basic residues. Residues 465 to 551 (RPSDEGESKC…RQRSRDGSRR (87 aa)) are compositionally biased toward basic and acidic residues.

The protein belongs to the cyclophilin-type PPIase family. PPIL4 subfamily.

The protein localises to the nucleus. It carries out the reaction [protein]-peptidylproline (omega=180) = [protein]-peptidylproline (omega=0). PPIases accelerate the folding of proteins. It catalyzes the cis-trans isomerization of proline imidic peptide bonds in oligopeptides. In Mycosarcoma maydis (Corn smut fungus), this protein is Peptidyl-prolyl cis-trans isomerase-like 4 (CYP6).